We begin with the raw amino-acid sequence, 104 residues long: Large ribosomal subunit protein uL24 (104 aa).

The protein belongs to the universal ribosomal protein uL24 family. In terms of assembly, part of the 50S ribosomal subunit.

One of two assembly initiator proteins, it binds directly to the 5'-end of the 23S rRNA, where it nucleates assembly of the 50S subunit. Functionally, one of the proteins that surrounds the polypeptide exit tunnel on the outside of the subunit. The chain is Large ribosomal subunit protein uL24 from Shewanella amazonensis (strain ATCC BAA-1098 / SB2B).